Consider the following 389-residue polypeptide: Glutamate 5-kinase (389 aa).

Lys-16 contributes to the ATP binding site. Residues Ser-56, Asp-143, and Asn-155 each contribute to the substrate site. Ser-175–Asp-176 is a binding site for ATP. Positions Ala-281–Ala-358 constitute a PUA domain.

This sequence belongs to the glutamate 5-kinase family.

The protein localises to the cytoplasm. The catalysed reaction is L-glutamate + ATP = L-glutamyl 5-phosphate + ADP. The protein operates within amino-acid biosynthesis; L-proline biosynthesis; L-glutamate 5-semialdehyde from L-glutamate: step 1/2. Its function is as follows. Catalyzes the transfer of a phosphate group to glutamate to form L-glutamate 5-phosphate. The sequence is that of Glutamate 5-kinase from Rhizobium rhizogenes (strain K84 / ATCC BAA-868) (Agrobacterium radiobacter).